Reading from the N-terminus, the 718-residue chain is Phenylalanine--tRNA ligase beta subunit (718 aa).

Residues 39–153 form the tRNA-binding domain; the sequence is LNEISGIKFG…IFDLESNPLK (115 aa). The region spanning 386–460 is the B5 domain; that stretch reads SKKTFLDLNY…RFYGLEKLKD (75 aa). Residues Asp-438, Asp-444, and Asp-448 each contribute to the Mg(2+) site.

The protein belongs to the phenylalanyl-tRNA synthetase beta subunit family. Type 1 subfamily. In terms of assembly, tetramer of two alpha and two beta subunits. Requires Mg(2+) as cofactor.

Its subcellular location is the cytoplasm. The enzyme catalyses tRNA(Phe) + L-phenylalanine + ATP = L-phenylalanyl-tRNA(Phe) + AMP + diphosphate + H(+). The sequence is that of Phenylalanine--tRNA ligase beta subunit from Mesomycoplasma hyopneumoniae (strain 232) (Mycoplasma hyopneumoniae).